A 141-amino-acid polypeptide reads, in one-letter code: Transcription antitermination protein NusB (141 aa).

It belongs to the NusB family.

Its function is as follows. Involved in transcription antitermination. Required for transcription of ribosomal RNA (rRNA) genes. Binds specifically to the boxA antiterminator sequence of the ribosomal RNA (rrn) operons. The polypeptide is Transcription antitermination protein NusB (Neisseria meningitidis serogroup B (strain ATCC BAA-335 / MC58)).